Consider the following 210-residue polypeptide: Chloramphenicol acetyltransferase (210 aa).

His-79 is a catalytic residue.

This sequence belongs to the transferase hexapeptide repeat family.

It catalyses the reaction chloramphenicol + acetyl-CoA = chloramphenicol 3-acetate + CoA. This enzyme is an effector of chloramphenicol resistance in bacteria. This chain is Chloramphenicol acetyltransferase (catB2), found in Escherichia coli.